Reading from the N-terminus, the 776-residue chain is K(+) efflux antiporter 3, chloroplastic (776 aa).

A chloroplast-targeting transit peptide spans 1–72 (MAISTMLGSI…KVFLDTSKRF (72 aa)). At 73–93 (YFQGRWSESSGRRVETYAGVD) the chain is on the lumenal, thylakoid side. Residues 94–114 (VASAVDVINDLGFDTLTFLMV) form a helical membrane-spanning segment. Residue Thr115 is a topological domain, stromal. A helical membrane pass occupies residues 116–136 (VIIVPAFRILKASPILGFFFA). Residues 137–153 (GVVLNQFGLIRNLTDVK) are Lumenal, thylakoid-facing. A helical transmembrane segment spans residues 154–174 (VLSEWGILFLLFEMGLELSLA). Topologically, residues 175–181 (RLKALAK) are stromal. Residues 182-202 (FAFGMGLTQVLLCTAAFTAFE) form a helical membrane-spanning segment. Residues 203–232 (LPPNGAIGTKILEFLFHSRPDLVNIRSIDE) lie on the Lumenal, thylakoid side of the membrane. A helical transmembrane segment spans residues 233–253 (AVVIGAALSLSSSAFVLQLLA). Residues 254 to 266 (EKGELPTRFGSAT) are Stromal-facing. Residues 267 to 287 (LGILLLQDIAVVPLLVILPVL) traverse the membrane as a helical segment. The Lumenal, thylakoid portion of the chain corresponds to 288-296 (ESQDIGGES). Residues 297 to 317 (IWPMLAKESAKALGGLGILSL) form a helical membrane-spanning segment. The Stromal portion of the chain corresponds to 318–338 (GGKFFLRRIFEVVAETRSSEA). A helical membrane pass occupies residues 339–359 (FVALCLLTVAGTSLVTQWLGF). Residues 360-389 (SDTLGAFLAGALLAETNFRTQIEADIRPFR) lie on the Lumenal, thylakoid side of the membrane. A helical transmembrane segment spans residues 390-410 (GLLLGLFFVTTGTSIDMEVLF). Residues 411–415 (REWPN) are Stromal-facing. A helical transmembrane segment spans residues 416–436 (VLSLLGGLIVIKTLIITAIGP). The Lumenal, thylakoid portion of the chain corresponds to 437 to 445 (RVGLTIQES). Residues 446-466 (VRVGFLLSQGGEFAFVVFSLA) form a helical membrane-spanning segment. Residues 467 to 468 (NR) lie on the Stromal side of the membrane. Residues 469–489 (LGVLPNELNKLLIIVVVLSMA) traverse the membrane as a helical segment. At 490 to 526 (LTPYLNQLGRKAADFLDERLDPGEKIGEDVNFDVSES) the chain is on the lumenal, thylakoid side. An RCK N-terminal domain is found at 524–649 (SESIVIIGFG…KKAGATDAIL (126 aa)). The helical transmembrane segment at 527–547 (IVIIGFGQMGQVLANFLSTPL) threads the bilayer. Over 548–776 (VSDSDLVGWP…FVGKADKAQD (229 aa)) the chain is Stromal. The interval 728–776 (MQMKASDSNSDSAAEILQETAGLSQPPEIDDSSVNIDNGFVGKADKAQD) is disordered.

This sequence belongs to the monovalent cation:proton antiporter 2 (CPA2) transporter (TC 2.A.37) family. KEA (TC 2.A.37.1) subfamily. In terms of tissue distribution, expressed at low levels in flowers, siliques and leaves. As to expression, expressed at low levels in flowers and leaves. Most abundant splice form in all organs, including siliques, flowers, leaves and roots. Preferentially expressed in photosynthetically active tissues, including seedling cotyledons and mature leaves. In terms of tissue distribution, expressed in shoots and roots.

Its subcellular location is the plastid. It is found in the chloroplast membrane. The protein localises to the golgi apparatus membrane. It localises to the chloroplast thylakoid membrane. It carries out the reaction K(+)(in) + H(+)(out) = K(+)(out) + H(+)(in). Regulated by a mechanism involving lumenal C-terminus region; a fine-tuned balance between photoprotective energy dissipation in high light and a maximum quantum yield in low light involves a reduced activity under high light. Its function is as follows. Electroneutral K(+)/H(+) efflux antiporter assuring proton efflux from the thylakoid lumen to the plastid stroma, thus increasing the membrane potential at the expense of the proton gradient (delta pH) component of the proton motive force (PMF). Promotes photosynthesis and growth in conditions where the chloroplast (cp)ATP synthase activity is low (e.g. cgl160 mutant background) by reducing the pH gradient across the thylakoid membrane. Accelerates photosynthetic acclimation in fluctuating light environments by modulating two components of the proton motive force, the proton gradient and the electric potential (delta Psi). Promotes the relaxation of photoprotective energy-dependent non-photochemical quenching (NPQ) after transitions from high to low light, thus enhancing photosystem II (PSII) quantum efficiency in fluctuating light. On transition from high to low light, slows down photoprotection by dissipating the pH gradient across the thylakoid membrane. During photosynthetic response on transition from dark to low light, involved in a sequential mechanism of adaptation; VCCN1 and CLCe first trigger the activation of photoprotection, which is later down-regulated by KEA3 to a low steady state, while adjusting electron transport. Together with the chloroplast NADH dehydrogenase-like (NDH) complex, maximizes photosynthesis efficiency after a long dark adaptation. Required in roots for rapid hyperosmotic-induced Ca(2+) responses and for osmo-sensory potentiation in hyperosmotic conditions. Low K(+)/H(+) efflux antiporter activity. In terms of biological role, low K(+)/H(+) efflux antiporter activity. Promotes non-photochemical quenching (NPQ) in high light conditions. This chain is K(+) efflux antiporter 3, chloroplastic, found in Arabidopsis thaliana (Mouse-ear cress).